We begin with the raw amino-acid sequence, 185 residues long: Probable RNA 2'-phosphotransferase (185 aa).

The protein belongs to the KptA/TPT1 family.

Its function is as follows. Removes the 2'-phosphate from RNA via an intermediate in which the phosphate is ADP-ribosylated by NAD followed by a presumed transesterification to release the RNA and generate ADP-ribose 1''-2''-cyclic phosphate (APPR&gt;P). May function as an ADP-ribosylase. The protein is Probable RNA 2'-phosphotransferase of Rhizobium rhizogenes (strain K84 / ATCC BAA-868) (Agrobacterium radiobacter).